The following is a 454-amino-acid chain: Capsid vertex component 1 (454 aa).

The tract at residues T197–N227 is disordered.

It belongs to the herpesviridae CVC1 protein family. As to quaternary structure, interacts (via C-terminus) with capsid vertex component 2/CVC2.

It localises to the virion. Its subcellular location is the host nucleus. Functionally, capsid vertex-specific component that plays a role during viral DNA encapsidation, assuring correct genome cleavage and presumably stabilizing capsids that contain full-length viral genomes. The sequence is that of Capsid vertex component 1 from Human herpesvirus 8 type P (isolate GK18) (HHV-8).